The chain runs to 69 residues: uncharacterized protein (69 aa).

The first 21 residues, 1–21 (MELLIPLSLLGLYLFSGTRDS), serve as a signal peptide directing secretion. Asn-41 carries N-linked (GlcNAc...) asparagine glycosylation.

It localises to the secreted. This is an uncharacterized protein from Dictyostelium discoideum (Social amoeba).